The primary structure comprises 487 residues: Glutamyl-tRNA(Gln) amidotransferase subunit A (487 aa).

Active-site charge relay system residues include Lys79 and Ser158. The active-site Acyl-ester intermediate is the Ser182.

This sequence belongs to the amidase family. GatA subfamily. Heterotrimer of A, B and C subunits.

It carries out the reaction L-glutamyl-tRNA(Gln) + L-glutamine + ATP + H2O = L-glutaminyl-tRNA(Gln) + L-glutamate + ADP + phosphate + H(+). Allows the formation of correctly charged Gln-tRNA(Gln) through the transamidation of misacylated Glu-tRNA(Gln) in organisms which lack glutaminyl-tRNA synthetase. The reaction takes place in the presence of glutamine and ATP through an activated gamma-phospho-Glu-tRNA(Gln). In Ehrlichia ruminantium (strain Welgevonden), this protein is Glutamyl-tRNA(Gln) amidotransferase subunit A.